Reading from the N-terminus, the 608-residue chain is Dolichyl-diphosphooligosaccharide--protein glycosyltransferase subunit 1 (608 aa).

An N-terminal signal peptide occupies residues 1 to 24 (MEAPAVCLLPLLLLLWAWAPAPGR). Over 25 to 435 (ASPEALPLVN…VVHYTFNKVL (411 aa)) the chain is Lumenal. Lys-188 is subject to N6-acetyllysine. N-linked (GlcNAc...) asparagine glycosylation occurs at Asn-300. Residues 436–456 (MLQEPLLVVAAFYILFFTVIV) traverse the membrane as a helical segment. Topologically, residues 457–607 (YVRLDFSITK…VTKIDHILDA (151 aa)) are cytoplasmic. Position 539 is an N6-acetyllysine; alternate (Lys-539). Lys-539 is covalently cross-linked (Glycyl lysine isopeptide (Lys-Gly) (interchain with G-Cter in SUMO2); alternate).

Belongs to the OST1 family. Component of the oligosaccharyltransferase (OST) complex. OST exists in two different complex forms which contain common core subunits RPN1, RPN2, OST48, OST4, DAD1 and TMEM258, either STT3A or STT3B as catalytic subunits, and form-specific accessory subunits. STT3A complex assembly occurs through the formation of 3 subcomplexes. Subcomplex 1 contains RPN1 and TMEM258, subcomplex 2 contains the STT3A-specific subunits STT3A, DC2/OSTC, and KCP2 as well as the core subunit OST4, and subcomplex 3 contains RPN2, DAD1, and OST48. The STT3A complex can form stable complexes with the Sec61 complex or with both the Sec61 and TRAP complexes. Interacts with TMEM35A/NACHO. Ubiquitinated by the ECS(ASB11) complex. Post-translationally, ufmylated by UFL1 in response to endoplasmic reticulum stress, promoting reticulophagy of endoplasmic reticulum sheets. Detected in liver (at protein level).

The protein resides in the endoplasmic reticulum membrane. Its pathway is protein modification; protein glycosylation. Functionally, subunit of the oligosaccharyl transferase (OST) complex that catalyzes the initial transfer of a defined glycan (Glc(3)Man(9)GlcNAc(2) in eukaryotes) from the lipid carrier dolichol-pyrophosphate to an asparagine residue within an Asn-X-Ser/Thr consensus motif in nascent polypeptide chains, the first step in protein N-glycosylation. N-glycosylation occurs cotranslationally and the complex associates with the Sec61 complex at the channel-forming translocon complex that mediates protein translocation across the endoplasmic reticulum (ER). All subunits are required for a maximal enzyme activity. In Sus scrofa (Pig), this protein is Dolichyl-diphosphooligosaccharide--protein glycosyltransferase subunit 1.